Reading from the N-terminus, the 71-residue chain is MQRMEEIAFKALNRVNNDRYLLANILFARIDELSKGAKPLVNMDVKKHKLTDIAMTEVAEGKIALSQIDQL.

It belongs to the RNA polymerase subunit omega family. As to quaternary structure, the RNAP catalytic core consists of 2 alpha, 1 beta/beta' and 1 omega subunit. When a sigma factor is associated with the core the holoenzyme is formed, which can initiate transcription.

The catalysed reaction is RNA(n) + a ribonucleoside 5'-triphosphate = RNA(n+1) + diphosphate. In terms of biological role, promotes RNA polymerase assembly. Latches the N- and C-terminal regions of the beta' subunit thereby facilitating its interaction with the beta and alpha subunits. In Wolinella succinogenes (strain ATCC 29543 / DSM 1740 / CCUG 13145 / JCM 31913 / LMG 7466 / NCTC 11488 / FDC 602W) (Vibrio succinogenes), this protein is DNA-directed RNA polymerase subunit omega.